The sequence spans 84 residues: uncharacterized protein (84 aa).

The next 3 membrane-spanning stretches (helical) occupy residues 4 to 20 (AYVLVSGFMLVLGIKYG), 27 to 49 (VWKAGLIILAGFAVIFAAAWIAF), and 59 to 81 (IGLAKSLSVVMGLIAGVLSVYVL).

Its subcellular location is the cell membrane. This is an uncharacterized protein from Archaeoglobus fulgidus (strain ATCC 49558 / DSM 4304 / JCM 9628 / NBRC 100126 / VC-16).